The following is a 49-amino-acid chain: SKMKKCEFAKIAKEQHMDGYHGVSLADWVCLVNNESDFNTKAINRNKGI.

The C-type lysozyme domain occupies 1–49 (SKMKKCEFAKIAKEQHMDGYHGVSLADWVCLVNNESDFNTKAINRNKGI). Glu-35 is a catalytic residue.

The protein belongs to the glycosyl hydrolase 22 family. In terms of assembly, monomer.

Its subcellular location is the secreted. It catalyses the reaction Hydrolysis of (1-&gt;4)-beta-linkages between N-acetylmuramic acid and N-acetyl-D-glucosamine residues in a peptidoglycan and between N-acetyl-D-glucosamine residues in chitodextrins.. Functionally, lysozymes have primarily a bacteriolytic function; those in tissues and body fluids are associated with the monocyte-macrophage system and enhance the activity of immunoagents. This is Lysozyme C (LYZ) from Pseudocheirus peregrinus (Common ring-tailed possum).